The primary structure comprises 348 residues: Dihydroorotase (348 aa).

Zn(2+) is bound by residues His14 and His16. Substrate is bound by residues 16-18 and Asn42; that span reads HLR. Zn(2+)-binding residues include Lys100, His137, and His175. An N6-carboxylysine modification is found at Lys100. His137 lines the substrate pocket. Leu220 lines the substrate pocket. Asp248 contributes to the Zn(2+) binding site. Asp248 is a catalytic residue. 2 residues coordinate substrate: His252 and Ala264.

Belongs to the metallo-dependent hydrolases superfamily. DHOase family. Class II DHOase subfamily. In terms of assembly, homodimer. Zn(2+) serves as cofactor.

It carries out the reaction (S)-dihydroorotate + H2O = N-carbamoyl-L-aspartate + H(+). It participates in pyrimidine metabolism; UMP biosynthesis via de novo pathway; (S)-dihydroorotate from bicarbonate: step 3/3. In terms of biological role, catalyzes the reversible cyclization of carbamoyl aspartate to dihydroorotate. The protein is Dihydroorotase of Azotobacter vinelandii (strain DJ / ATCC BAA-1303).